Here is a 385-residue protein sequence, read N- to C-terminus: Isomaltose glucohydrolase (385 aa).

Position 125 (Trp125) interacts with substrate. The active-site Proton acceptor is the Asp175. Glu178 (proton donor) is an active-site residue. Glu335 functions as the Proton acceptor in the catalytic mechanism.

Belongs to the glycosyl hydrolase 15 family.

It localises to the cytoplasm. It catalyses the reaction isomaltose + H2O = beta-D-glucose + D-glucose. In terms of biological role, involved in the intracellular degradation of the cyclic tetrasaccharide cyclobis-(1-6)-alpha-nigerosyl (CNN) formed extracellularly from starch. Catalyzes the hydrolysis of alpha-1,6-glucosidic linkage from the non-reducing end of isomaltose to yield beta-D-glucose and D-glucose. Can also act on panose and isomaltotriose at a lower rate. It displays low or no activity toward CNN and the general GH15 enzyme substrates such as maltose, soluble starch or dextran. The protein is Isomaltose glucohydrolase of Kribbella flavida (strain DSM 17836 / JCM 10339 / NBRC 14399).